Reading from the N-terminus, the 607-residue chain is Chaperone protein DnaK (607 aa).

Thr-174 bears the Phosphothreonine; by autocatalysis mark. The span at 577–594 (QSAGSTAGNPGQGQSTEN) shows a compositional bias: polar residues. Residues 577-607 (QSAGSTAGNPGQGQSTENPGGKTIDGDYKVN) form a disordered region.

It belongs to the heat shock protein 70 family.

In terms of biological role, acts as a chaperone. This Dictyoglomus turgidum (strain DSM 6724 / Z-1310) protein is Chaperone protein DnaK.